Reading from the N-terminus, the 296-residue chain is DNA repair protein complementing XP-A cells homolog (296 aa).

Positions 1–10 are enriched in polar residues; the sequence is MSAEVSTNES. The segment at 1 to 39 is disordered; the sequence is MSAEVSTNESAPPAEKKSKLTNAQKARIERNQAKAQKLR. Basic and acidic residues predominate over residues 26-39; that stretch reads ARIERNQAKAQKLR. Residues 26–47 carry the Nuclear localization signal motif; that stretch reads ARIERNQAKAQKLREAKLVSHP. Residues cysteine 126, cysteine 129, cysteine 147, and cysteine 150 each contribute to the Zn(2+) site. A zinc finger spans residues 126–150; sequence CLECGDMFADSYLFNNFGHSVCDKC.

Belongs to the XPA family. Strongly expressed in the central nervous system and muscles.

The protein resides in the nucleus. Its function is as follows. Involved in DNA excision repair. Initiates repair by binding to damaged sites with various affinities, depending on the photoproduct and the transcriptional state of the region. This chain is DNA repair protein complementing XP-A cells homolog (Xpac), found in Drosophila melanogaster (Fruit fly).